The primary structure comprises 528 residues: Peptide chain release factor 3 (528 aa).

The region spanning 10-280 (AKRRTFGIIS…IDMAPAPGPR (271 aa)) is the tr-type G domain. GTP contacts are provided by residues 19 to 26 (SHPDAGKT), 87 to 91 (DTPGH), and 141 to 144 (NKLD).

The protein belongs to the TRAFAC class translation factor GTPase superfamily. Classic translation factor GTPase family. PrfC subfamily.

It is found in the cytoplasm. Its function is as follows. Increases the formation of ribosomal termination complexes and stimulates activities of RF-1 and RF-2. It binds guanine nucleotides and has strong preference for UGA stop codons. It may interact directly with the ribosome. The stimulation of RF-1 and RF-2 is significantly reduced by GTP and GDP, but not by GMP. This chain is Peptide chain release factor 3, found in Desulfotalea psychrophila (strain LSv54 / DSM 12343).